A 100-amino-acid polypeptide reads, in one-letter code: Putative septation protein SpoVG (100 aa).

Belongs to the SpoVG family.

Its function is as follows. Could be involved in septation. This chain is Putative septation protein SpoVG, found in Staphylococcus aureus (strain JH1).